Consider the following 335-residue polypeptide: DNA-directed RNA polymerase subunit alpha (335 aa).

The tract at residues 1 to 233 (MVREKIRVST…DLLIPFLHAE (233 aa)) is alpha N-terminal domain (alpha-NTD). The tract at residues 263-335 (KKKIALKFIF…HFVIDLKNKR (73 aa)) is alpha C-terminal domain (alpha-CTD).

The protein belongs to the RNA polymerase alpha chain family. In terms of assembly, in plastids the minimal PEP RNA polymerase catalytic core is composed of four subunits: alpha, beta, beta', and beta''. When a (nuclear-encoded) sigma factor is associated with the core the holoenzyme is formed, which can initiate transcription.

Its subcellular location is the plastid. It localises to the chloroplast. The enzyme catalyses RNA(n) + a ribonucleoside 5'-triphosphate = RNA(n+1) + diphosphate. Functionally, DNA-dependent RNA polymerase catalyzes the transcription of DNA into RNA using the four ribonucleoside triphosphates as substrates. This Spinacia oleracea (Spinach) protein is DNA-directed RNA polymerase subunit alpha.